A 68-amino-acid chain; its full sequence is Arabinogalactan peptide 1 (68 aa).

A signal peptide spans 1–30; that stretch reads MAGQLKSKIVAVAVAAVVVVASSLVGTASA. Ser-40 carries the GPI-anchor amidated serine lipid modification. The propeptide at 41-68 is removed in mature form; sequence GATATAAAAPAFAAVSVAAAALGGYLFC.

It belongs to the AG-peptide AGP family. O-glycosylated on hydroxyprolines; noncontiguous hydroxylproline residues are glycosylated with arabinogalactan. Expressed in roots, stems, flowers and seeds.

The protein resides in the vacuole. It localises to the aleurone grain membrane. Proteoglycan that seems to be implicated in diverse developmental roles such as differentiation, cell-cell recognition, embryogenesis and programmed cell death. This is Arabinogalactan peptide 1 (AGPEP1) from Oryza sativa subsp. japonica (Rice).